Here is a 410-residue protein sequence, read N- to C-terminus: Transposase for insertion sequence element IS801 (410 aa).

The protein belongs to the transposase 32 family.

Involved in the transposition of the insertion sequence. The sequence is that of Transposase for insertion sequence element IS801 from Pseudomonas savastanoi pv. phaseolicola (Pseudomonas syringae pv. phaseolicola).